Reading from the N-terminus, the 794-residue chain is Glutamine--tRNA ligase (794 aa).

A disordered region spans residues 192 to 217 (DNEKPKKKKEKPAKVEDKAAPVATSE). Positions 277 to 287 (PEPNGYLHIGH) match the 'HIGH' region motif. ATP contacts are provided by residues 278-280 (EPN) and 284-290 (HIGHAKA). 2 residues coordinate L-glutamine: Asp-310 and Tyr-450. ATP-binding positions include Thr-469, 498–499 (RL), and 506–508 (MSK). Residues 505-509 (VMSKR) carry the 'KMSKS' region motif.

This sequence belongs to the class-I aminoacyl-tRNA synthetase family.

It carries out the reaction tRNA(Gln) + L-glutamine + ATP = L-glutaminyl-tRNA(Gln) + AMP + diphosphate. This is Glutamine--tRNA ligase from Lupinus luteus (European yellow lupine).